The primary structure comprises 312 residues: DNA-directed RNA polymerase subunit alpha (312 aa).

An alpha N-terminal domain (alpha-NTD) region spans residues 1–229; it reads MLQYQIDRID…ELFQPLATVT (229 aa). Residues 240–312 are alpha C-terminal domain (alpha-CTD); the sequence is PSPEAQIPLE…ISIPQSRTSV (73 aa).

It belongs to the RNA polymerase alpha chain family. As to quaternary structure, in cyanobacteria the RNAP catalytic core is composed of 2 alpha, 1 beta, 1 beta', 1 gamma and 1 omega subunit. When a sigma factor is associated with the core the holoenzyme is formed, which can initiate transcription.

It catalyses the reaction RNA(n) + a ribonucleoside 5'-triphosphate = RNA(n+1) + diphosphate. DNA-dependent RNA polymerase catalyzes the transcription of DNA into RNA using the four ribonucleoside triphosphates as substrates. This is DNA-directed RNA polymerase subunit alpha from Prochlorococcus marinus (strain AS9601).